Here is a 349-residue protein sequence, read N- to C-terminus: UDP-N-acetylenolpyruvoylglucosamine reductase (349 aa).

Residues 25 to 197 (GIAARARFAA…VAVTFRLPKQ (173 aa)) enclose the FAD-binding PCMH-type domain. Residue R173 is part of the active site. S249 (proton donor) is an active-site residue. E345 is an active-site residue.

Belongs to the MurB family. The cofactor is FAD.

The protein localises to the cytoplasm. The enzyme catalyses UDP-N-acetyl-alpha-D-muramate + NADP(+) = UDP-N-acetyl-3-O-(1-carboxyvinyl)-alpha-D-glucosamine + NADPH + H(+). The protein operates within cell wall biogenesis; peptidoglycan biosynthesis. Functionally, cell wall formation. In Burkholderia cenocepacia (strain HI2424), this protein is UDP-N-acetylenolpyruvoylglucosamine reductase.